We begin with the raw amino-acid sequence, 185 residues long: TATA-box-binding protein (185 aa).

2 repeat units span residues 8-84 (IENI…VEML) and 99-175 (IQNM…LHEL).

This sequence belongs to the TBP family.

General factor that plays a role in the activation of archaeal genes transcribed by RNA polymerase. Binds specifically to the TATA box promoter element which lies close to the position of transcription initiation. The polypeptide is TATA-box-binding protein (Thermococcus sibiricus (strain DSM 12597 / MM 739)).